A 68-amino-acid chain; its full sequence is Venom peptide 3 (68 aa).

An N-terminal signal peptide occupies residues 1-25 (MTKQSIVIVLFAAIAMMACLQRVTA). 5 AXPX repeats span residues 25-28 (AEPA), 33-36 (AAPI), 37-40 (AEPY), 41-44 (ANPE), and 47-50 (ASPE). Residues 26 to 51 (EPAPEPIAAPIAEPYANPEAIASPEA) constitute a propeptide that is removed on maturation. A Leucine amide modification is found at Leu65.

As to expression, expressed by the venom gland.

Its subcellular location is the secreted. It is found in the target cell membrane. Its function is as follows. Antimicrobial peptide with strong activity against the fungi B.cinerea (MIC=5 uM) and C.albicans (MIC=33 uM), and no activity against the Gram-negative bacterium E.coli (MIC&gt;200 uM) and the Gram-positive bacterium S.aureus (MIC&gt;200 uM). Shows cytolytic activity against insect cell lines. Has no hemolytic activity against human erythrocytes. In vivo, peptide injection in the vicinity of the head and thorax of lepidopteran larvae induces feeding disorder that lasts one or two days before recovering. The sequence is that of Venom peptide 3 from Orancistrocerus drewseni (Solitary wasp).